A 157-amino-acid polypeptide reads, in one-letter code: Beta-defensin 125 (157 aa).

The N-terminal stretch at 1-20 (MNLLMLTFIICGLLTQVTKG) is a signal peptide. Intrachain disulfides connect cysteine 27–cysteine 55, cysteine 35–cysteine 49, and cysteine 39–cysteine 56. Residues 109-157 (GETITPETNTPETTMPPSETTSSKTTMPPSETATSETMPPPSQTALTHN) are disordered. The span at 110 to 140 (ETITPETNTPETTMPPSETTSSKTTMPPSET) shows a compositional bias: low complexity. Residues 141–157 (ATSETMPPPSQTALTHN) show a composition bias toward polar residues.

This sequence belongs to the beta-defensin family.

The protein resides in the secreted. Functionally, has antibacterial activity. This is Beta-defensin 125 (DEFB125) from Pongo pygmaeus (Bornean orangutan).